A 373-amino-acid chain; its full sequence is Outer membrane protein assembly factor BamC (373 aa).

The first 16 residues, 1 to 16 (MLKQVTPLVLIAAVTA), serve as a signal peptide directing secretion. Cys17 carries N-palmitoyl cysteine lipidation. Residue Cys17 is the site of S-diacylglycerol cysteine attachment.

It belongs to the BamC family. In terms of assembly, part of the Bam complex.

It is found in the cell outer membrane. In terms of biological role, part of the outer membrane protein assembly complex, which is involved in assembly and insertion of beta-barrel proteins into the outer membrane. The chain is Outer membrane protein assembly factor BamC from Shewanella sediminis (strain HAW-EB3).